The sequence spans 434 residues: Putative ankyrin repeat protein FPV219 (434 aa).

7 ANK repeats span residues aspartate 33–leucine 62, glutamate 66–cysteine 95, histidine 101–tyrosine 131, threonine 132–threonine 161, leucine 165–serine 195, leucine 196–alanine 225, and glutamate 229–isoleucine 258.

The chain is Putative ankyrin repeat protein FPV219 from Fowlpox virus (strain NVSL) (FPV).